The following is a 72-amino-acid chain: TKCYKTGDRIISEACPPGQDLCYMKTWCDVFCGTRGRVIELGCTATCPTVKPHEQITCCSTDNCDPHHKMLQ.

Cystine bridges form between cysteine 3–cysteine 22, cysteine 15–cysteine 43, cysteine 28–cysteine 32, cysteine 47–cysteine 58, and cysteine 59–cysteine 64.

This sequence belongs to the three-finger toxin family. Long-chain subfamily. Type II alpha-neurotoxin sub-subfamily. Expressed by the venom gland.

The protein resides in the secreted. Functionally, binds with high affinity to muscular (alpha-1/CHRNA1) and neuronal (alpha-7/CHRNA7) nicotinic acetylcholine receptor (nAChR) and inhibits acetylcholine from binding to the receptor, thereby impairing neuromuscular and neuronal transmission. The protein is Long neurotoxin OH-5 of Ophiophagus hannah (King cobra).